A 159-amino-acid polypeptide reads, in one-letter code: Ribosomal RNA large subunit methyltransferase H (159 aa).

S-adenosyl-L-methionine is bound at residue Gly108.

It belongs to the RNA methyltransferase RlmH family. In terms of assembly, homodimer.

The protein resides in the cytoplasm. The enzyme catalyses pseudouridine(1915) in 23S rRNA + S-adenosyl-L-methionine = N(3)-methylpseudouridine(1915) in 23S rRNA + S-adenosyl-L-homocysteine + H(+). Specifically methylates the pseudouridine at position 1915 (m3Psi1915) in 23S rRNA. In Lactobacillus gasseri (strain ATCC 33323 / DSM 20243 / BCRC 14619 / CIP 102991 / JCM 1131 / KCTC 3163 / NCIMB 11718 / NCTC 13722 / AM63), this protein is Ribosomal RNA large subunit methyltransferase H.